The primary structure comprises 403 residues: Argininosuccinate synthase 1 (403 aa).

Residues 10 to 18 and A37 each bind ATP; that span reads SYSGGLDTS. Residues Y88 and S93 each coordinate L-citrulline. G118 provides a ligand contact to ATP. Residues T120, N124, and D125 each coordinate L-aspartate. N124 is an L-citrulline binding site. Residues R128, S179, S188, E264, and Y276 each coordinate L-citrulline.

Belongs to the argininosuccinate synthase family. Type 1 subfamily. As to quaternary structure, homotetramer.

It localises to the cytoplasm. It catalyses the reaction L-citrulline + L-aspartate + ATP = 2-(N(omega)-L-arginino)succinate + AMP + diphosphate + H(+). It participates in amino-acid biosynthesis; L-arginine biosynthesis; L-arginine from L-ornithine and carbamoyl phosphate: step 2/3. In Rhizobium johnstonii (strain DSM 114642 / LMG 32736 / 3841) (Rhizobium leguminosarum bv. viciae), this protein is Argininosuccinate synthase 1.